Consider the following 160-residue polypeptide: Tumor suppressor ARF (160 aa).

The segment at 1 to 63 (MGRRFVVTVR…RRGPQPHPGP (63 aa)) is interaction with CDK5RAP3 and MDM2. Disordered regions lie at residues 49 to 74 (PERI…QSGS) and 90 to 116 (HPLP…GRGA).

As to quaternary structure, does not interact with cyclins, CDK1, CDK2, CDK4, CDK5 or CDK6. Binds to BCL6, E2F1, HUWE1, MDM2, MYC, NPM1/B23, TOP1/TOPOI and UBE2I/UBC9. Interacts with TBRG1 and COMMD1. Interacts with CDKN2AIP and E4F1. Interacts with CDK5RAP3 and MDM2; form a ternary complex involved in regulation of p53/TP53. Interacts with NOP53; the interaction is direct and promotes ARF nucleoplasmic relocalization and ubiquitin-mediated proteasomal degradation. Interacts with TTF1 (via the N-terminal region (NRD) and a C-terminal region); the interaction is direct and inhibits the nucleolar localization of TTF1. In terms of processing, ubiquitinated in normal cells by TRIP12 via the ubiquitin fusion degradation (UFD) pathway, a process that mediates ubiquitination at the N-terminus, regardless of the absence of lysine residues. Ubiquitination leads to its proteasomal degradation. In cancer cells, however, TRIP12 is located in a different cell compartment, preventing ubiquitination and degradation. As to expression, widely expressed with very low levels in kidney and colon.

The protein localises to the nucleus. Its subcellular location is the nucleolus. It localises to the nucleoplasm. Functionally, capable of inducing cell cycle arrest in G1 and G2 phases. Acts as a tumor suppressor. Binds to MDM2 and blocks its nucleocytoplasmic shuttling by sequestering it in the nucleolus. This inhibits the oncogenic action of MDM2 by blocking MDM2-induced degradation of p53 and enhancing p53-dependent transactivation and apoptosis. Also induces G2 arrest and apoptosis in a p53-independent manner by preventing the activation of cyclin B1/CDC2 complexes. Binds to BCL6 and down-regulates BCL6-induced transcriptional repression. Binds to E2F1 and MYC and blocks their transcriptional activator activity but has no effect on MYC transcriptional repression. Binds to TOP1/TOPOI and stimulates its activity. This complex binds to rRNA gene promoters and may play a role in rRNA transcription and/or maturation. Interacts with NPM1/B23 and promotes its polyubiquitination and degradation, thus inhibiting rRNA processing. Plays a role in inhibiting ribosome biogenesis, perhaps by binding to the nucleolar localization sequence of transcription termination factor TTF1, and thereby preventing nucleolar localization of TTF1. Interacts with COMMD1 and promotes its 'Lys63'-linked polyubiquitination. Interacts with UBE2I/UBC9 and enhances sumoylation of a number of its binding partners including MDM2 and E2F1. Binds to HUWE1 and represses its ubiquitin ligase activity. May play a role in controlling cell proliferation and apoptosis during mammary gland development. The chain is Tumor suppressor ARF from Rattus norvegicus (Rat).